The sequence spans 124 residues: Small ribosomal subunit protein uS12 (124 aa).

At Asp-89 the chain carries 3-methylthioaspartic acid.

It belongs to the universal ribosomal protein uS12 family. Part of the 30S ribosomal subunit. Contacts proteins S8 and S17. May interact with IF1 in the 30S initiation complex.

Its function is as follows. With S4 and S5 plays an important role in translational accuracy. In terms of biological role, interacts with and stabilizes bases of the 16S rRNA that are involved in tRNA selection in the A site and with the mRNA backbone. Located at the interface of the 30S and 50S subunits, it traverses the body of the 30S subunit contacting proteins on the other side and probably holding the rRNA structure together. The combined cluster of proteins S8, S12 and S17 appears to hold together the shoulder and platform of the 30S subunit. This is Small ribosomal subunit protein uS12 from Mannheimia succiniciproducens (strain KCTC 0769BP / MBEL55E).